The chain runs to 440 residues: 3-phosphoshikimate 1-carboxyvinyltransferase (440 aa).

3-phosphoshikimate contacts are provided by K28, S29, and R33. K28 contributes to the phosphoenolpyruvate binding site. Residues G98 and R126 each contribute to the phosphoenolpyruvate site. 3-phosphoshikimate-binding residues include S171, Q173, D318, and K345. Position 173 (Q173) interacts with phosphoenolpyruvate. D318 (proton acceptor) is an active-site residue. Residues R349 and R391 each coordinate phosphoenolpyruvate.

Belongs to the EPSP synthase family. Monomer.

Its subcellular location is the cytoplasm. It carries out the reaction 3-phosphoshikimate + phosphoenolpyruvate = 5-O-(1-carboxyvinyl)-3-phosphoshikimate + phosphate. The protein operates within metabolic intermediate biosynthesis; chorismate biosynthesis; chorismate from D-erythrose 4-phosphate and phosphoenolpyruvate: step 6/7. Catalyzes the transfer of the enolpyruvyl moiety of phosphoenolpyruvate (PEP) to the 5-hydroxyl of shikimate-3-phosphate (S3P) to produce enolpyruvyl shikimate-3-phosphate and inorganic phosphate. This chain is 3-phosphoshikimate 1-carboxyvinyltransferase, found in Anaeromyxobacter dehalogenans (strain 2CP-C).